The following is a 119-amino-acid chain: HTH-type transcriptional regulator SarX (119 aa).

Positions 55-78 form a DNA-binding region, H-T-H motif; the sequence is LKTAMDELDLSRTKLLVSIRRLIE.

It belongs to the SarA family.

It localises to the cytoplasm. Involved in the regulation of virulence genes. Acts as a repressor of the agr locus and consequently targets genes regulated by the agr system such as sspA, hla and hlb. Binds directly to the agr promoter region. This is HTH-type transcriptional regulator SarX (sarX) from Staphylococcus aureus (strain bovine RF122 / ET3-1).